The primary structure comprises 868 residues: Facilitated trehalose transporter Tret1 (868 aa).

Disordered regions lie at residues 1 to 213 and 257 to 314; these read MSGR…QKAT and KESS…LIHR. Residues 1-403 lie on the Cytoplasmic side of the membrane; it reads MSGRDNRGAG…VYRPTTNPIY (403 aa). Residues 25-43 show a composition bias toward basic and acidic residues; it reads KLKEKLTRAGDDQGYHRVE. Composition is skewed to low complexity over residues 44 to 57, 79 to 91, and 117 to 126; these read SNLS…SLDT, PQQQ…QQLR, and PFQQQQQRTP. Basic and acidic residues-rich tracts occupy residues 146–155 and 257–290; these read EIREHRDRQQ and KESS…KLDK. 5 positions are modified to phosphoserine: Ser-259, Ser-260, Ser-261, Ser-331, and Ser-333. A disordered region spans residues 335–367; sequence EDFHTSRQHFQQQRSISTDSRKSRRPYEMDEMG. Residues 342-352 are compositionally biased toward polar residues; the sequence is QHFQQQRSIST. Positions 353–367 are enriched in basic and acidic residues; it reads DSRKSRRPYEMDEMG. Residues 404–424 traverse the membrane as a helical segment; that stretch reads IWTQVLAALSVSLGSLVVGFV. The Extracellular segment spans residues 425–451; the sequence is SAYTSPALVSMTNRNMTSFEVTPQAAS. N-linked (GlcNAc...) asparagine glycosylation occurs at Asn-439. The chain crosses the membrane as a helical span at residues 452 to 472; it reads WVGGIMPLAGLAGGIAGGPFI. Residues 473–484 are Cytoplasmic-facing; that stretch reads EYLGRRNTILAT. The chain crosses the membrane as a helical span at residues 485–505; it reads AIPFIVSSLLIACAVNVAMVL. Residues 506–508 are Extracellular-facing; the sequence is AGR. A helical membrane pass occupies residues 509–529; sequence FLAGFCVGIASLSLPVYLGET. The Cytoplasmic portion of the chain corresponds to 530–535; that stretch reads VQPEVR. Residues 536-556 traverse the membrane as a helical segment; the sequence is GTLGLLPTAFGNIGILLCFVA. At 557–563 the chain is on the extracellular side; sequence GTYMDWS. Residues 564 to 584 traverse the membrane as a helical segment; sequence MLAFLGAALPVPFLILMFLIP. At 585–653 the chain is on the cytoplasmic side; it reads ETPRWFVSRG…NLKPLSISLG (69 aa). A helical membrane pass occupies residues 654 to 674; that stretch reads LMFFQQLSGINAVIFYTVSIF. At 675–684 the chain is on the extracellular side; it reads KDAGSTIDGN. Residues 685 to 705 traverse the membrane as a helical segment; it reads LCTIIVGIVNFMATFIATLLI. Topologically, residues 706-711 are cytoplasmic; sequence DRAGRK. A helical membrane pass occupies residues 712 to 732; sequence ILLYVSNIAMIITLFVLGGFF. Residues 733–751 lie on the Extracellular side of the membrane; that stretch reads YCKSHGQDVSQLGWLPLSC. The helical transmembrane segment at 752–772 threads the bilayer; sequence FVIYILGFSLGFGPIPWLMMG. Over 773–778 the chain is Cytoplasmic; the sequence is EILPSK. Residues 779–799 traverse the membrane as a helical segment; it reads IRGSAASVATAFNWSCTFVVT. The Extracellular segment spans residues 800 to 812; it reads KTFQDMIDFMGAH. The helical transmembrane segment at 813 to 833 threads the bilayer; the sequence is GAFWLFGSICFIGLFFVILYV. Topologically, residues 834-868 are cytoplasmic; it reads PETQGKTLEDIERKMMGRVRRMSSVANMKPLAFNM. Residues Ser-856 and Ser-857 each carry the phosphoserine modification.

Belongs to the major facilitator superfamily. Sugar transporter (TC 2.A.1.1) family. Trehalose transporter subfamily.

The protein resides in the cell membrane. In terms of biological role, low-capacity facilitative transporter for trehalose. Does not transport maltose, sucrose or lactose. Mediates the bidirectional transfer of trehalose. Responsible for the transport of trehalose synthesized in the fat body and the incorporation of trehalose into other tissues that require a carbon source, thereby regulating trehalose levels in the hemolymph. This Drosophila pseudoobscura pseudoobscura (Fruit fly) protein is Facilitated trehalose transporter Tret1.